The sequence spans 341 residues: MEGGGRGPNQTILSEIEHMPEAPRQRISHHRRARSETFFSGESIDDLLLFDPSDIDFSSLDFLNAPPPPQQSQQQPQASPMSVDSEETSSNGVVPPNSLPPKPEARFGRHVRSFSVDSDFFDDLGVTEEKFIATSSGEKKKGNHHHSRSNSMDGEMSSASFNIESILASVSGKDSGKKNMGMGGDRLAELALLDPKRAKRILANRQSAARSKERKIRYTGELERKVQTLQNEATTLSAQVTMLQRGTSELNTENKHLKMRLQALEQQAELRDALNEALRDELNRLKVVAGEIPQGNGNSYNRAQFSSQQSAMNQFGNKTNQQMSTNGQPSLPSYMDFTKRG.

Disordered regions lie at residues 1 to 33, 59 to 106, and 135 to 156; these read MEGGGRGPNQTILSEIEHMPEAPRQRISHHRRA, SLDF…PEAR, and SSGEKKKGNHHHSRSNSMDGEM. The interval 1–162 is necessary and sufficient for transient T-DNA transformation end expression; that stretch reads MEGGGRGPNQ…DGEMSSASFN (162 aa). The segment covering 15–24 has biased composition (basic and acidic residues); the sequence is EIEHMPEAPR. The segment covering 71 to 80 has biased composition (low complexity); it reads QSQQQPQASP. Ser-79 carries the phosphoserine modification. The segment at 163 to 341 is involved in homomultimerization and histone H2A binding; the sequence is IESILASVSG…PSYMDFTKRG (179 aa). Residues 194–257 form the bZIP domain; the sequence is DPKRAKRILA…SELNTENKHL (64 aa). A basic motif region spans residues 196–217; that stretch reads KRAKRILANRQSAARSKERKIR. Residues 198–205 carry the Nuclear localization signal motif; it reads AKRILANR. Residues 222–257 form a leucine-zipper region; it reads LERKVQTLQNEATTLSAQVTMLQRGTSELNTENKHL. A compositionally biased stretch (polar residues) spans 307–331; it reads SQQSAMNQFGNKTNQQMSTNGQPSL. A disordered region spans residues 307–341; sequence SQQSAMNQFGNKTNQQMSTNGQPSLPSYMDFTKRG.

Belongs to the bZIP family. In terms of assembly, forms homomultimers. Interacts with Agrobacterium tumefaciens VirE2 and mediates its translocation to the host nucleus. Binds to VIP2. Forms a complex made of Agrobacterium VirE2, VIP1, VIP2 and single-stranded DNA (ssDNA). The interaction with KAP1 mediates its nuclear import. Binds to the H2A histone RAT5. Interacts with MPK3 and Agrobacterium virF. Forms a complex made of VIP1, VBF and Agrobacterium virE2. Interacts with SCF(VBF) E3 ubiquitin ligase complex. Binds directly to VBF. Forms heterodimers with BZIP34 and BZIP61. Phosphorylated by MPK3. This phosphorylation promotes nuclear localization. As to expression, mostly expressed in dividing cells, present in leaves, roots and seedlings.

It is found in the cytoplasm. The protein resides in the nucleus. Functionally, transcription activator that binds specifically to the VIP1 response elements (VREs) DNA sequence 5'-ACNGCT-3' found in some stress genes (e.g. TRX8 and MYB44), when phosphorylated/activated by MPK3. Required for Agrobacterium VirE2 nuclear import and tumorigenicity. Promotes transient expression of T-DNA in early stages by interacting with VirE2 in complex with the T-DNA and facilitating its translocation to the nucleus, and mediates stable genetic transformation by Agrobacterium by binding H2A histone. Prevents cell differentiation and shoot formation. Limits sulfate utilization efficiency (SUE) and sulfate uptake, especially in low-sulfur conditions. Plays a role in osmosensory response by binding to the 5'-AGCTGT/G-3' DNA sequence found in the promoters of the hypoosmolarity-responsive genes CYP707A1 and CYP707A3. Involved in the negative regulation of touch-induced root bending and salt-dependent root bending. The protein is Transcription factor VIP1 of Arabidopsis thaliana (Mouse-ear cress).